The sequence spans 1006 residues: Probable beta-galactosidase A (1006 aa).

Positions 1–18 (MKLLSVCAIALLAAQAAG) are cleaved as a signal peptide. Tyr96, Asn140, Ala141, and Glu142 together coordinate substrate. A glycan (N-linked (GlcNAc...) asparagine) is linked at Asn156. Residue Asn199 coordinates substrate. Residue Glu200 is the Proton donor of the active site. Cysteines 205 and 206 form a disulfide. A substrate-binding site is contributed by Tyr260. A disulfide bond links Cys266 and Cys315. The active-site Nucleophile is Glu298. Tyr364 lines the substrate pocket. Residues Asn373, Asn402, Asn422, Asn622, Asn760, Asn777, and Asn914 are each glycosylated (N-linked (GlcNAc...) asparagine).

This sequence belongs to the glycosyl hydrolase 35 family.

The protein resides in the secreted. It catalyses the reaction Hydrolysis of terminal non-reducing beta-D-galactose residues in beta-D-galactosides.. Cleaves beta-linked terminal galactosyl residues from gangliosides, glycoproteins, and glycosaminoglycans. The polypeptide is Probable beta-galactosidase A (lacA) (Aspergillus fumigatus (strain CBS 144.89 / FGSC A1163 / CEA10) (Neosartorya fumigata)).